The sequence spans 314 residues: Homoserine kinase (314 aa).

An ATP-binding site is contributed by 95 to 105 (PHSRGLGSSAS).

The protein belongs to the GHMP kinase family. Homoserine kinase subfamily.

It localises to the cytoplasm. The catalysed reaction is L-homoserine + ATP = O-phospho-L-homoserine + ADP + H(+). The protein operates within amino-acid biosynthesis; L-threonine biosynthesis; L-threonine from L-aspartate: step 4/5. Functionally, catalyzes the ATP-dependent phosphorylation of L-homoserine to L-homoserine phosphate. The sequence is that of Homoserine kinase from Mycobacterium ulcerans (strain Agy99).